A 262-amino-acid chain; its full sequence is Ribose-5-phosphate isomerase A (262 aa).

Residues 33–36 (TGST), 89–92 (DGAD), and 102–105 (KGGG) contribute to the substrate site. Glutamate 111 functions as the Proton acceptor in the catalytic mechanism. Lysine 129 contributes to the substrate binding site.

The protein belongs to the ribose 5-phosphate isomerase family. Homodimer.

It carries out the reaction aldehydo-D-ribose 5-phosphate = D-ribulose 5-phosphate. It functions in the pathway carbohydrate degradation; pentose phosphate pathway; D-ribose 5-phosphate from D-ribulose 5-phosphate (non-oxidative stage): step 1/1. Functionally, catalyzes the reversible conversion of ribose-5-phosphate to ribulose 5-phosphate. In Ruegeria pomeroyi (strain ATCC 700808 / DSM 15171 / DSS-3) (Silicibacter pomeroyi), this protein is Ribose-5-phosphate isomerase A.